The following is a 207-amino-acid chain: Oligoribonuclease (207 aa).

The Exonuclease domain maps to 20 to 183; it reads LVWLDMEMTG…ADIHESIDEL (164 aa). The active site involves Tyr-141.

This sequence belongs to the oligoribonuclease family.

It localises to the cytoplasm. Functionally, 3'-to-5' exoribonuclease specific for small oligoribonucleotides. The sequence is that of Oligoribonuclease from Paraburkholderia xenovorans (strain LB400).